We begin with the raw amino-acid sequence, 196 residues long: Putative AAA family ATPase L572 (196 aa).

ATP is bound at residue N32–T39.

It belongs to the AAA ATPase family.

This Acanthamoeba polyphaga mimivirus (APMV) protein is Putative AAA family ATPase L572.